The following is an 85-amino-acid chain: UPF0386 protein RL2079 (85 aa).

It belongs to the UPF0386 family.

The protein is UPF0386 protein RL2079 of Rhizobium johnstonii (strain DSM 114642 / LMG 32736 / 3841) (Rhizobium leguminosarum bv. viciae).